The following is a 266-amino-acid chain: MRIEVVNVSHIFHRGTPLEKKALENVSLVINEGECLLVAGNTGSGKSTLLQIVAGLIEPTSGDVLYDGERKKGYEIRRNIGIAFQYPEDQFFAERVFDEVAFAVKNFYPDRDPVPLVKKAMEFVGLDFDSFKDRVPFFLSGGEKRRVAIASVIVHEPDILILDEPLVGLDREGKTDLLRIVEKWKTLGKTVILISHDIETVINHVDRVVVLEKGKKVFDGTRMEFLEKYDPRFFTSKMLVMRRLVLKGEDPFSMSDDELLERVCNS.

The region spanning 3 to 238 (IEVVNVSHIF…YDPRFFTSKM (236 aa)) is the ABC transporter domain. 43–48 (GSGKST) contacts ATP. The active-site Proton acceptor is Glu164. The interval 220-266 (GTRMEFLEKYDPRFFTSKMLVMRRLVLKGEDPFSMSDDELLERVCNS) is required for heterodimer formation.

It belongs to the ABC transporter superfamily. Energy-coupling factor EcfA family. As to quaternary structure, forms a heterodimer with EcfA1. Forms a stable energy-coupling factor (ECF) transporter complex composed of 2 membrane-embedded substrate-binding proteins (S component, RibU, BioY), 2 ATP-binding proteins (A component) and 2 transmembrane proteins (T component) upon coexpression in E.coli. Stable subcomplexes with both A plus T components can also be isolated. This complex interacts with at least 2 substrate-specific components, BioY and RibU.

The protein resides in the cell inner membrane. Its function is as follows. ATP-binding (A) component of a common energy-coupling factor (ECF) ABC-transporter complex. Unlike classic ABC transporters this ECF transporter provides the energy necessary to transport a number of different substrates. Expression of the complex plus RibU in E.coli allows riboflavin uptake; uptake does not occur in the absence of RibU or the EcfA1A2T complex. This Thermotoga maritima (strain ATCC 43589 / DSM 3109 / JCM 10099 / NBRC 100826 / MSB8) protein is Energy-coupling factor transporter ATP-binding protein EcfA2 (ecfA2).